The sequence spans 332 residues: Anthranilate phosphoribosyltransferase (332 aa).

5-phospho-alpha-D-ribose 1-diphosphate-binding positions include glycine 79, 82-83, serine 87, 89-92, 107-115, and serine 119; these read GD, NIST, and KHGNRSVSS. Glycine 79 lines the anthranilate pocket. Residue serine 91 coordinates Mg(2+). Position 110 (asparagine 110) interacts with anthranilate. Arginine 165 contributes to the anthranilate binding site. Mg(2+)-binding residues include aspartate 223 and glutamate 224.

This sequence belongs to the anthranilate phosphoribosyltransferase family. Homodimer. Requires Mg(2+) as cofactor.

It catalyses the reaction N-(5-phospho-beta-D-ribosyl)anthranilate + diphosphate = 5-phospho-alpha-D-ribose 1-diphosphate + anthranilate. The protein operates within amino-acid biosynthesis; L-tryptophan biosynthesis; L-tryptophan from chorismate: step 2/5. In terms of biological role, catalyzes the transfer of the phosphoribosyl group of 5-phosphorylribose-1-pyrophosphate (PRPP) to anthranilate to yield N-(5'-phosphoribosyl)-anthranilate (PRA). The sequence is that of Anthranilate phosphoribosyltransferase from Serratia proteamaculans (strain 568).